The following is a 765-amino-acid chain: 5-methyltetrahydropteroyltriglutamate--homocysteine methyltransferase (765 aa).

5-methyltetrahydropteroyltri-L-glutamate contacts are provided by residues Arg-18–Lys-21 and Lys-114. L-homocysteine contacts are provided by residues Ile-437–Ser-439 and Glu-490. L-methionine is bound by residues Ile-437–Ser-439 and Glu-490. Trp-567 provides a ligand contact to 5-methyltetrahydropteroyltri-L-glutamate. Position 605 (Asp-605) interacts with L-homocysteine. An L-methionine-binding site is contributed by Asp-605. Glu-611 is a binding site for 5-methyltetrahydropteroyltri-L-glutamate. Zn(2+) is bound by residues His-647, Cys-649, and Glu-671. The Proton donor role is filled by His-700. Cys-732 contributes to the Zn(2+) binding site.

This sequence belongs to the vitamin-B12 independent methionine synthase family. It depends on Zn(2+) as a cofactor.

It carries out the reaction 5-methyltetrahydropteroyltri-L-glutamate + L-homocysteine = tetrahydropteroyltri-L-glutamate + L-methionine. It functions in the pathway amino-acid biosynthesis; L-methionine biosynthesis via de novo pathway; L-methionine from L-homocysteine (MetE route): step 1/1. Its function is as follows. Catalyzes the transfer of a methyl group from 5-methyltetrahydrofolate to homocysteine resulting in methionine formation. The protein is 5-methyltetrahydropteroyltriglutamate--homocysteine methyltransferase of Listeria welshimeri serovar 6b (strain ATCC 35897 / DSM 20650 / CCUG 15529 / CIP 8149 / NCTC 11857 / SLCC 5334 / V8).